We begin with the raw amino-acid sequence, 465 residues long: Cysteine--tRNA ligase (465 aa).

C27 contacts Zn(2+). Residues 29 to 39 (PTVYNFFHIGN) carry the 'HIGH' region motif. Zn(2+) is bound by residues C207, H232, and E236. The 'KMSKS' region signature appears at 264-268 (KMSKS). Position 267 (K267) interacts with ATP.

Belongs to the class-I aminoacyl-tRNA synthetase family. Monomer. Zn(2+) is required as a cofactor.

The protein localises to the cytoplasm. The enzyme catalyses tRNA(Cys) + L-cysteine + ATP = L-cysteinyl-tRNA(Cys) + AMP + diphosphate. The chain is Cysteine--tRNA ligase from Clostridium botulinum (strain 657 / Type Ba4).